Here is a 159-residue protein sequence, read N- to C-terminus: UPF0201 protein MK0399 (159 aa).

It belongs to the UPF0201 family.

In Methanopyrus kandleri (strain AV19 / DSM 6324 / JCM 9639 / NBRC 100938), this protein is UPF0201 protein MK0399.